We begin with the raw amino-acid sequence, 259 residues long: PKHD-type hydroxylase PsycPRwf_1523 (259 aa).

Residues 80–180 (VIMPPLFSAY…RLAMVTWVQS (101 aa)) form the Fe2OG dioxygenase domain. Positions 98, 100, and 161 each coordinate Fe cation. Position 171 (Arg-171) interacts with 2-oxoglutarate.

Requires Fe(2+) as cofactor. L-ascorbate serves as cofactor.

This chain is PKHD-type hydroxylase PsycPRwf_1523, found in Psychrobacter sp. (strain PRwf-1).